We begin with the raw amino-acid sequence, 183 residues long: Threonylcarbamoyl-AMP synthase (183 aa).

The YrdC-like domain occupies Met-1–Gly-183.

This sequence belongs to the SUA5 family. TsaC subfamily.

Its subcellular location is the cytoplasm. It catalyses the reaction L-threonine + hydrogencarbonate + ATP = L-threonylcarbamoyladenylate + diphosphate + H2O. In terms of biological role, required for the formation of a threonylcarbamoyl group on adenosine at position 37 (t(6)A37) in tRNAs that read codons beginning with adenine. Catalyzes the conversion of L-threonine, HCO(3)(-)/CO(2) and ATP to give threonylcarbamoyl-AMP (TC-AMP) as the acyladenylate intermediate, with the release of diphosphate. This is Threonylcarbamoyl-AMP synthase from Haemophilus influenzae (strain PittEE).